The sequence spans 408 residues: Succinylornithine transaminase (408 aa).

The residue at position 252 (Lys-252) is an N6-(pyridoxal phosphate)lysine.

The protein belongs to the class-III pyridoxal-phosphate-dependent aminotransferase family. AstC subfamily. It depends on pyridoxal 5'-phosphate as a cofactor.

It catalyses the reaction N(2)-succinyl-L-ornithine + 2-oxoglutarate = N-succinyl-L-glutamate 5-semialdehyde + L-glutamate. It functions in the pathway amino-acid degradation; L-arginine degradation via AST pathway; L-glutamate and succinate from L-arginine: step 3/5. Functionally, catalyzes the transamination of N(2)-succinylornithine and alpha-ketoglutarate into N(2)-succinylglutamate semialdehyde and glutamate. Can also act as an acetylornithine aminotransferase. The polypeptide is Succinylornithine transaminase (Salmonella typhimurium (strain LT2 / SGSC1412 / ATCC 700720)).